The following is a 525-amino-acid chain: MTENIHKHRILILDFGSQYTQLVARRVRELGVYCELWAWDVTEAQIRDFNPSGIILSGGPESTTEENSPRAPQYVFEAGVPVFGVCYGMQTMAMQLGGHVEGSNEREFGYAQVEVLTDSALVRGIEDSLTADGKPLLDVWMSHGDKVTAIPSDFVTVASTESCPFAIMANEEKRFYGVQFHPEVTHTRQGMRMLERFVRDICQCEALWTPAKIIDDAVARIREQVGDDKVILGLSGGVDSSVTAMLLHRAIGKNLTCVFVDNGLLRLNEAEQVMDMFGDHFGLNIVHVPAEERFLSALAGENDPEAKRKIIGRVFVEVFDEEALKLEDVKWLAQGTIYPDVIESAASATGKAHVIKSHHNVGGLPKEMKMGLVEPLKELFKDEVRKIGLELGLPYDMLYRHPFPGPGLGVRVLGEVKKEYCDLLRRADAIFIEELRKADLYDKVSQAFTVFLPVRSVGVMGDGRKYDWVVSLRAVETIDFMTAHWAHLPYDFLGRVSNRIINEVNGISRVVYDISGKPPATIEWE.

The region spanning 9 to 207 (RILILDFGSQ…VRDICQCEAL (199 aa)) is the Glutamine amidotransferase type-1 domain. The Nucleophile role is filled by C86. Catalysis depends on residues H181 and E183. One can recognise a GMPS ATP-PPase domain in the interval 208 to 400 (WTPAKIIDDA…LGLPYDMLYR (193 aa)). ATP is bound at residue 235–241 (SGGVDSS).

Homodimer.

The catalysed reaction is XMP + L-glutamine + ATP + H2O = GMP + L-glutamate + AMP + diphosphate + 2 H(+). Its pathway is purine metabolism; GMP biosynthesis; GMP from XMP (L-Gln route): step 1/1. Catalyzes the synthesis of GMP from XMP. The sequence is that of GMP synthase [glutamine-hydrolyzing] from Salmonella paratyphi B (strain ATCC BAA-1250 / SPB7).